A 468-amino-acid chain; its full sequence is MFLATLYFALPLLDLLMSAEVSGGDRLDCVKASDQCLKEQSCSTKYRTLRQCVAGKETNFSLTSGLEAKDECRSAMEALKQKSLYNCRCKRGMKKEKNCLRIYWSMYQSLQGNDLLEDSPYEPVNSRLSDIFRAVPFISDVFQQVEHISKGNNCLDAAKACNLDDTCKKYRSAYITPCTTSMSNEVCNRRKCHKALRQFFDKVPAKHSYGMLFCSCRDIACTERRRQTIVPVCSYEERERPNCLSLQDSCKTNYICRSRLADFFTNCQPESRSVSNCLKENYADCLLAYSGLIGTVMTPNYVDSSSLSVAPWCDCSNSGNDLEDCLKFLNFFKDNTCLKNAIQAFGNGSDVTMWQPAPPVQTTTATTTTAFRVKNKPLGPAGSENEIPTHVLPPCANLQAQKLKSNVSGSTHLCLSDSDFGKDGLAGASSHITTKSMAAPPSCSLSSLPVLMLTALAALLSVSLAETS.

Positions 1 to 24 (MFLATLYFALPLLDLLMSAEVSGG) are cleaved as a signal peptide. 3 tandem repeats follow at residues 25–113 (DRLD…LQGN), 150–238 (KGNN…YEER), and 239–342 (ERPN…KNAI). Cysteine 36 and cysteine 42 form a disulfide bridge. N-linked (GlcNAc...) asparagine glycosylation is present at asparagine 59. 10 disulfide bridges follow: cysteine 154-cysteine 214, cysteine 161-cysteine 167, cysteine 178-cysteine 192, cysteine 187-cysteine 233, cysteine 216-cysteine 221, cysteine 243-cysteine 313, cysteine 250-cysteine 256, cysteine 267-cysteine 285, cysteine 277-cysteine 337, and cysteine 315-cysteine 325. Residues asparagine 347 and asparagine 406 are each glycosylated (N-linked (GlcNAc...) asparagine). Serine 430 carries the GPI-anchor amidated serine lipid modification. Residues 431–468 (HITTKSMAAPPSCSLSSLPVLMLTALAALLSVSLAETS) constitute a propeptide, removed in mature form.

Belongs to the GDNFR family. In terms of assembly, interacts with GDNF ligand and RET: forms a 2:2:2 ternary complex composed of GDNF ligand, GFRA1 and RET receptor. Interacts with SORL1, either alone or in complex with GDNF. Interaction between SORL1 and GFRA1 leads to GFRA1 internalization, but not degradation. As to expression, expressed in liver, brain, kidney and cochlea.

It localises to the cell membrane. It is found in the golgi apparatus. The protein resides in the trans-Golgi network. The protein localises to the endosome. Its subcellular location is the multivesicular body. Functionally, coreceptor for GDNF, a neurotrophic factor that enhances survival and morphological differentiation of dopaminergic neurons and increases their high-affinity dopamine uptake. GDNF-binding leads to autophosphorylation and activation of the RET receptor. The sequence is that of GDNF family receptor alpha-1 (Gfra1) from Rattus norvegicus (Rat).